The following is a 277-amino-acid chain: Trypsin-2 (277 aa).

The signal sequence occupies residues 1–19; it reads MSNKIAILLLAVVVAVVAC. A propeptide spans 20 to 50 (activation peptide); sequence AQAQPSRRHHLVHPLLPRFLPRLHRDSNGHR. Residues 51–276 enclose the Peptidase S1 domain; the sequence is VVGGFQIDVS…VRDWVRENSG (226 aa). A disulfide bridge connects residues Cys76 and Cys92. Residues His91 and Asp136 each act as charge relay system in the active site. Cystine bridges form between Cys201-Cys217 and Cys228-Cys252. Ser232 (charge relay system) is an active-site residue.

It belongs to the peptidase S1 family. Midgut.

The protein resides in the secreted. The enzyme catalyses Preferential cleavage: Arg-|-Xaa, Lys-|-Xaa.. In terms of biological role, major function may be to aid in digestion of the blood meal. This chain is Trypsin-2 (TRYP2), found in Anopheles gambiae (African malaria mosquito).